The sequence spans 526 residues: Tyrosine-protein kinase transforming protein Src (526 aa).

A disordered region spans residues 1 to 52 (MGSSKSKPKDPSQRRRSLEPPDSTHHGGFPASQTPDETAAPDAHRNPSRSFG). Gly-2 carries the N-myristoyl glycine; by host lipid modification. A compositionally biased stretch (basic and acidic residues) spans 7–25 (KPKDPSQRRRSLEPPDSTH). Positions 81–142 (GGVTTFVALY…PSNYVAPSDS (62 aa)) constitute an SH3 domain. In terms of domain architecture, SH2 spans 148–245 (WYFGKITRRE…GLCHRLTNVC (98 aa)). Residues 267-517 (LRLEAKLGQG…TFKYLQAQLL (251 aa)) form the Protein kinase domain. Residues 273–281 (LGQGCFGEV) and Lys-295 each bind ATP. The Proton acceptor role is filled by Asp-386. Tyr-416 is subject to Phosphotyrosine; by autocatalysis.

The protein belongs to the protein kinase superfamily. Tyr protein kinase family. SRC subfamily. It depends on Mn(2+) as a cofactor. The phosphorylated form is termed pp60v-src.

It carries out the reaction L-tyrosyl-[protein] + ATP = O-phospho-L-tyrosyl-[protein] + ADP + H(+). In terms of biological role, this phosphoprotein, required for both the initiation and the maintenance of neoplastic transformation, is a protein kinase that catalyzes the phosphorylation of tyrosine residues in vitro. The polypeptide is Tyrosine-protein kinase transforming protein Src (V-SRC) (Gallus gallus (Chicken)).